The sequence spans 485 residues: ATP synthase subunit beta (485 aa).

ATP is bound at residue 158–165; sequence GGAGVGKT.

The protein belongs to the ATPase alpha/beta chains family. In terms of assembly, F-type ATPases have 2 components, CF(1) - the catalytic core - and CF(0) - the membrane proton channel. CF(1) has five subunits: alpha(3), beta(3), gamma(1), delta(1), epsilon(1). CF(0) has four main subunits: a(1), b(1), b'(1) and c(9-12).

Its subcellular location is the cell inner membrane. The enzyme catalyses ATP + H2O + 4 H(+)(in) = ADP + phosphate + 5 H(+)(out). Its function is as follows. Produces ATP from ADP in the presence of a proton gradient across the membrane. The catalytic sites are hosted primarily by the beta subunits. The protein is ATP synthase subunit beta of Erythrobacter litoralis (strain HTCC2594).